We begin with the raw amino-acid sequence, 272 residues long: NAD kinase (272 aa).

The active-site Proton acceptor is Asp50. NAD(+) is bound by residues 50 to 51 (DG), 126 to 127 (NE), Arg152, Asp154, 165 to 170 (TAYNKS), and Ala189.

It belongs to the NAD kinase family. A divalent metal cation serves as cofactor.

The protein resides in the cytoplasm. The enzyme catalyses NAD(+) + ATP = ADP + NADP(+) + H(+). Functionally, involved in the regulation of the intracellular balance of NAD and NADP, and is a key enzyme in the biosynthesis of NADP. Catalyzes specifically the phosphorylation on 2'-hydroxyl of the adenosine moiety of NAD to yield NADP. The protein is NAD kinase of Streptococcus pneumoniae (strain 70585).